The chain runs to 130 residues: Glycine cleavage system H protein (130 aa).

The Lipoyl-binding domain occupies 22–103 (KAYIGISDCA…PYGSWIAAIE (82 aa)). At lysine 63 the chain carries N6-lipoyllysine.

This sequence belongs to the GcvH family. In terms of assembly, the glycine cleavage system is composed of four proteins: P, T, L and H. It depends on (R)-lipoate as a cofactor.

The glycine cleavage system catalyzes the degradation of glycine. The H protein shuttles the methylamine group of glycine from the P protein to the T protein. This Clostridium botulinum (strain Okra / Type B1) protein is Glycine cleavage system H protein.